The following is a 138-amino-acid chain: MRALWIVAVLLLGVEGSLVEFETLIMKIAGRSGVWYYSSYGCYCGTGGQGWPQDASDRCCFEHDCCYAKLTGCDPITDVYTYRQEDGEIVCGGEDPCGTQICECDKAAAICFRDSMDTYNHKYWRFSLENCQGESQPC.

Residues 1-37 form the signal peptide; the sequence is MRALWIVAVLLLGVEGSLVEFETLIMKIAGRSGVWYY. 7 disulfide bridges follow: Cys42–Cys131, Cys44–Cys60, Cys59–Cys111, Cys65–Cys138, Cys66–Cys104, Cys73–Cys97, and Cys91–Cys102. The propeptide occupies 78–83; it reads DVYTYR. Pyrrolidone carboxylic acid is present on Gln84. Residues 119-124 constitute a propeptide that is removed on maturation; that stretch reads YNHKYW.

Belongs to the phospholipase A2 family. Group II subfamily. D49 sub-subfamily. In terms of assembly, heterodimer of an acidic subunit and a basic chain. The acidic subunit is non-toxic, without enzymatic activity and comprises 3 peptides that are cross-linked by 7 disulfide bridges. The basic subunit is toxic, has phospholipase A2 activity and is composed of a single chain. In terms of tissue distribution, expressed by the venom gland.

The protein localises to the secreted. Functionally, snake venom phospholipase A2 (PLA2) that inhibits neuromuscular transmission by blocking acetylcholine release from the nerve termini. The chain is Acidic phospholipase A2 homolog sistruxin A from Sistrurus tergeminus (Western massasauga).